Consider the following 475-residue polypeptide: Glucose-6-phosphate 1-dehydrogenase gcd1 (475 aa).

Positions 42 and 146 each coordinate NADP(+). Residues Lys-146, Glu-214, and Asp-233 each contribute to the D-glucose 6-phosphate site. The active-site Proton acceptor is the His-238. Lys-332 is a binding site for D-glucose 6-phosphate. 2 residues coordinate NADP(+): Arg-342 and Arg-365.

The protein belongs to the glucose-6-phosphate dehydrogenase family.

The protein localises to the cytoplasm. The enzyme catalyses D-glucose 6-phosphate + NADP(+) = 6-phospho-D-glucono-1,5-lactone + NADPH + H(+). Its pathway is carbohydrate degradation; pentose phosphate pathway; D-ribulose 5-phosphate from D-glucose 6-phosphate (oxidative stage): step 1/3. Its function is as follows. Catalyzes the rate-limiting step of the oxidative pentose-phosphate pathway, which represents a route for the dissimilation of carbohydrates besides glycolysis. The main function of this enzyme is to provide reducing power (NADPH) and pentose phosphates for fatty acid and nucleic acid synthesis. The sequence is that of Glucose-6-phosphate 1-dehydrogenase gcd1 from Schizosaccharomyces pombe (strain 972 / ATCC 24843) (Fission yeast).